Reading from the N-terminus, the 199-residue chain is uncharacterized protein (199 aa).

An N-terminal signal peptide occupies residues 1–28 (MKKLATVGSLIVTSTLVFSSMPFQNAHA).

It localises to the secreted. This is an uncharacterized protein from Staphylococcus aureus (strain NCTC 8325 / PS 47).